Reading from the N-terminus, the 321-residue chain is Nod factor export ATP-binding protein I (321 aa).

Residues 17-247 form the ABC transporter domain; the sequence is LSVEGLRKRY…EIGCDVVEVY (231 aa). Residue 49 to 56 coordinates ATP; it reads GPNGAGKT.

It belongs to the ABC transporter superfamily. Lipooligosaccharide exporter (TC 3.A.1.102) family. The complex is composed of two ATP-binding proteins (NodI) and two transmembrane proteins (NodJ).

The protein localises to the cell inner membrane. Its function is as follows. Part of the ABC transporter complex NodIJ involved in the export of the nodulation factors (Nod factors), the bacterial signal molecules that induce symbiosis and subsequent nodulation induction. Nod factors are LCO (lipo-chitin oligosaccharide), a modified beta-1,4-linked N-acetylglucosamine oligosaccharide. This subunit is responsible for energy coupling to the transport system. This chain is Nod factor export ATP-binding protein I, found in Ralstonia nicotianae (strain ATCC BAA-1114 / GMI1000) (Ralstonia solanacearum).